A 491-amino-acid polypeptide reads, in one-letter code: GTPase Der (491 aa).

The EngA-type G 1 domain maps to 3–166; the sequence is PVIALVGRPN…AALGIFPRDD (164 aa). Residues 9 to 16, 56 to 60, and 118 to 121 contribute to the GTP site; these read GRPNVGKS, DTGGI, and NKVD. The interval 164-191 is disordered; sequence RDDEGEEGEGEAEVVAEGEEPKRVPGPS. Residues 166–181 show a composition bias toward acidic residues; sequence DEGEEGEGEAEVVAEG. Over residues 182-191 the composition is skewed to basic and acidic residues; it reads EEPKRVPGPS. Residues 196–369 form the EngA-type G 2 domain; sequence IKIAIIGRPN…SVQAAFQSAV (174 aa). Residues 202–209, 249–253, and 314–317 contribute to the GTP site; these read GRPNVGKS, DTAGV, and NKWD. In terms of domain architecture, KH-like spans 370 to 454; that stretch reads TRWPTSRLTR…PIRIEYKGGD (85 aa). A compositionally biased stretch (basic and acidic residues) spans 452 to 464; the sequence is GGDNPYEGKKNSL. Residues 452–491 form a disordered region; it reads GGDNPYEGKKNSLTERQVNKKRRLMSHHKKAEKKRRDKKR. Positions 470-491 are enriched in basic residues; the sequence is NKKRRLMSHHKKAEKKRRDKKR.

It belongs to the TRAFAC class TrmE-Era-EngA-EngB-Septin-like GTPase superfamily. EngA (Der) GTPase family. In terms of assembly, associates with the 50S ribosomal subunit.

GTPase that plays an essential role in the late steps of ribosome biogenesis. This chain is GTPase Der, found in Azotobacter vinelandii (strain DJ / ATCC BAA-1303).